Here is a 178-residue protein sequence, read N- to C-terminus: MSGGKYVDSEGHLYTAPIREQGNIYKPNNKAMAEEMNEKQVYDAHTKEIDLVNRDPKHLNDDVVKIDFEDVIAEPEGTHSFDGIWKASFTTFTVTKYWFYRLLSTLFGIPMALIWGIYFAILSFLHIWAVVPCIKSFLIEIQCIGRVYSIYIHTFCDPLFEAVGKLFSNIRINMQKEI.

The residue at position 2 (serine 2) is an N-acetylserine. Serine 2 is subject to Phosphoserine. The tract at residues 2-94 (SGGKYVDSEG…WKASFTTFTV (93 aa)) is required for homooligomerization. Residues 2–104 (SGGKYVDSEG…TKYWFYRLLS (103 aa)) are Cytoplasmic-facing. Residue lysine 5 is modified to N6-acetyllysine; alternate. Residue lysine 5 forms a Glycyl lysine isopeptide (Lys-Gly) (interchain with G-Cter in ubiquitin); alternate linkage. Position 6 is a phosphotyrosine (tyrosine 6). Serine 9 carries the phosphoserine modification. Position 14 is a phosphotyrosine; by ABL1 (tyrosine 14). At tyrosine 25 the chain carries Phosphotyrosine. Glycyl lysine isopeptide (Lys-Gly) (interchain with G-Cter in ubiquitin) cross-links involve residues lysine 26, lysine 30, lysine 39, lysine 47, and lysine 57. Positions 82-94 (DGIWKASFTTFTV) are interaction with CAVIN3. Residues 105–125 (TLFGIPMALIWGIYFAILSFL) constitute an intramembrane region (helical). Residues 126 to 178 (HIWAVVPCIKSFLIEIQCIGRVYSIYIHTFCDPLFEAVGKLFSNIRINMQKEI) lie on the Cytoplasmic side of the membrane. The tract at residues 131-142 (VPCIKSFLIEIQ) is interacts with SPRY1, SPRY2, SPRY3 and SPRY4. 3 S-palmitoyl cysteine lipidation sites follow: cysteine 133, cysteine 143, and cysteine 156. The segment at 149–160 (SIYIHTFCDPLF) is interacts with SPRY1, SPRY2, and SPRY4. Positions 167 to 178 (FSNIRINMQKEI) are interacts with SPRY1, SPRY2, SPRY3 and SPRY4.

Belongs to the caveolin family. In terms of assembly, homooligomer. Interacts with GLIPR2. Interacts with NOSTRIN. Interacts with SNAP25 and STX1A. Interacts (via the N-terminus) with DPP4; the interaction is direct. Interacts with CTNNB1, CDH1 and JUP. Interacts with PACSIN2; this interaction induces membrane tubulation. Interacts with SLC7A9. Interacts with BMX and BTK. Interacts with TGFBR1. Interacts with CAVIN3 (via leucine-zipper domain) in a cholesterol-sensitive manner. Interacts with CAVIN1. Interacts with EHD2 in a cholesterol-dependent manner. Forms a ternary complex with UBXN6 and VCP; mediates CAV1 targeting to lysosomes for degradation. Interacts with ABCG1; this interaction regulates ABCG1-mediated cholesterol efflux. Interacts with NEU3; this interaction enhances NEU3 sialidase activity within caveola. Interacts (via C-terminus) with SPRY1, SPRY2 (via C-terminus), SPRY3, and SPRY4. Interacts with IGFBP5; this interaction allows trafficking of IGFBP5 from the plasma membrane to the nucleus. Post-translationally, phosphorylated at Tyr-14 by ABL1 in response to oxidative stress. In terms of processing, ubiquitinated. Undergo monoubiquitination and multi- and/or polyubiquitination. Monoubiquitination of N-terminal lysines promotes integration in a ternary complex with UBXN6 and VCP which promotes oligomeric CAV1 targeting to lysosomes for degradation. Ubiquitinated by ZNRF1; leading to degradation and modulation of the TLR4-mediated immune response.

It is found in the golgi apparatus membrane. It localises to the cell membrane. Its subcellular location is the membrane. The protein localises to the caveola. The protein resides in the membrane raft. In terms of biological role, may act as a scaffolding protein within caveolar membranes. Forms a stable heterooligomeric complex with CAV2 that targets to lipid rafts and drives caveolae formation. Mediates the recruitment of CAVIN proteins (CAVIN1/2/3/4) to the caveolae. Interacts directly with G-protein alpha subunits and can functionally regulate their activity. Involved in the costimulatory signal essential for T-cell receptor (TCR)-mediated T-cell activation. Its binding to DPP4 induces T-cell proliferation and NF-kappa-B activation in a T-cell receptor/CD3-dependent manner. Recruits CTNNB1 to caveolar membranes and may regulate CTNNB1-mediated signaling through the Wnt pathway. Negatively regulates TGFB1-mediated activation of SMAD2/3 by mediating the internalization of TGFBR1 from membrane rafts leading to its subsequent degradation. Binds 20(S)-hydroxycholesterol (20(S)-OHC). The sequence is that of Caveolin-1 (CAV1) from Dasypus novemcinctus (Nine-banded armadillo).